The primary structure comprises 203 residues: Recombination protein RecR (203 aa).

The C4-type zinc-finger motif lies at 56–71 (CAVCGNVSDEERCRIC). The region spanning 79–179 (SLICVVEEPK…TVTRIASGLP (101 aa)) is the Toprim domain.

Belongs to the RecR family.

In terms of biological role, may play a role in DNA repair. It seems to be involved in an RecBC-independent recombinational process of DNA repair. It may act with RecF and RecO. The protein is Recombination protein RecR of Mycolicibacterium vanbaalenii (strain DSM 7251 / JCM 13017 / BCRC 16820 / KCTC 9966 / NRRL B-24157 / PYR-1) (Mycobacterium vanbaalenii).